Reading from the N-terminus, the 132-residue chain is Small ribosomal subunit protein uS8c (132 aa).

This sequence belongs to the universal ribosomal protein uS8 family. Part of the 30S ribosomal subunit.

The protein resides in the plastid. It is found in the chloroplast. In terms of biological role, one of the primary rRNA binding proteins, it binds directly to 16S rRNA central domain where it helps coordinate assembly of the platform of the 30S subunit. This chain is Small ribosomal subunit protein uS8c (rps8), found in Huperzia lucidula (Shining clubmoss).